Reading from the N-terminus, the 218-residue chain is Octanoyltransferase (218 aa).

The BPL/LPL catalytic domain occupies 45–218 (AGTADELWLL…TDALQRAIYS (174 aa)). Substrate-binding positions include 84–91 (RGGQITYH), 151–153 (ALG), and 164–166 (GLA). Cysteine 182 acts as the Acyl-thioester intermediate in catalysis.

This sequence belongs to the LipB family.

It localises to the cytoplasm. It catalyses the reaction octanoyl-[ACP] + L-lysyl-[protein] = N(6)-octanoyl-L-lysyl-[protein] + holo-[ACP] + H(+). It functions in the pathway protein modification; protein lipoylation via endogenous pathway; protein N(6)-(lipoyl)lysine from octanoyl-[acyl-carrier-protein]: step 1/2. Catalyzes the transfer of endogenously produced octanoic acid from octanoyl-acyl-carrier-protein onto the lipoyl domains of lipoate-dependent enzymes. Lipoyl-ACP can also act as a substrate although octanoyl-ACP is likely to be the physiological substrate. The chain is Octanoyltransferase from Thiobacillus denitrificans (strain ATCC 25259 / T1).